The following is a 329-amino-acid chain: MPVLMPSAHVPTIDISPLFGTDAAAKKRVAEEIHGACRGSGFFYATNHGVDVQQLQDVVNEFHGAMTDQEKHDLAIHAYNPDNPHVRNGYYKAVPGRKAVESFCYLNPDFGEDHPMIAAGTPMHEVNLWPDEERHPRFRPFCEGYYRQMLKLSTVLMRGLALALGRPEHFFDAALAEQDSLSSVSLIRYPYLEEYPPVKTGPDGQLLSFEDHLDVSMITVLFQTQVQNLQVETVDGWRDIPTSENDFLVNCGTYMAHVTNDYFPAPNHRVKFVNAERLSLPFFLNGGHEAVIEPFVPEGASEEVRNEALSYGDYLQHGLRALIVKNGQT.

Arg87, Tyr91, Ser183, and Tyr189 together coordinate isopenicillin N. Arg87, Tyr91, Ser183, Tyr189, His212, and Asp214 together coordinate N-[(5S)-5-amino-5-carboxypentanoyl]-L-cysteinyl-D-valine. The Fe2OG dioxygenase domain maps to 180-286; the sequence is SLSSVSLIRY…RLSLPFFLNG (107 aa). Residues His212, Asp214, and His268 each coordinate Fe(2+). Residue Arg277 participates in 2-oxoglutarate binding. Residue Ser279 participates in isopenicillin N binding. Ser279 lines the N-[(5S)-5-amino-5-carboxypentanoyl]-L-cysteinyl-D-valine pocket.

This sequence belongs to the iron/ascorbate-dependent oxidoreductase family. The cofactor is Fe cation. L-ascorbate is required as a cofactor.

The catalysed reaction is N-[(5S)-5-amino-5-carboxypentanoyl]-L-cysteinyl-D-valine + O2 = isopenicillin N + 2 H2O. It functions in the pathway antibiotic biosynthesis; penicillin G biosynthesis; penicillin G from L-alpha-aminoadipate and L-cysteine and L-valine: step 2/3. Its function is as follows. Removes, in the presence of oxygen, 4 hydrogen atoms from delta-L-(alpha-aminoadipyl)-L-cysteinyl-D-valine (ACV) to form the azetidinone and thiazolidine rings of isopenicillin. The polypeptide is Isopenicillin N synthase (pcbC) (Streptomyces clavuligerus).